We begin with the raw amino-acid sequence, 428 residues long: Threonine synthase (428 aa).

Lys107 is subject to N6-(pyridoxal phosphate)lysine.

Belongs to the threonine synthase family. Pyridoxal 5'-phosphate is required as a cofactor.

It catalyses the reaction O-phospho-L-homoserine + H2O = L-threonine + phosphate. Its pathway is amino-acid biosynthesis; L-threonine biosynthesis; L-threonine from L-aspartate: step 5/5. With respect to regulation, is competitively inhibited by L-threo-3-hydroxyhomoserine phosphate. In terms of biological role, catalyzes the gamma-elimination of phosphate from L-phosphohomoserine and the beta-addition of water to produce L-threonine. To a lesser extent, is able to slowly catalyze the deamination of L-threonine into alpha-ketobutyrate and that of L-serine and 3-chloroalanine into pyruvate. Is also able to rapidly convert vinylglycine to threonine, which proves that the pyridoxal p-quinonoid of vinylglycine is an intermediate in the TS reaction. The protein is Threonine synthase (thrC) of Escherichia coli (strain K12).